A 222-amino-acid polypeptide reads, in one-letter code: Transcriptional regulatory protein PmrA (222 aa).

A Response regulatory domain is found at 2-116; it reads KLLIVEDDKL…ELQARVRALI (115 aa). Residue D51 is modified to 4-aspartylphosphate. Positions 124–218 form a DNA-binding region, ompR/PhoB-type; sequence NSKIQVDNIT…LRGFGYLLTK (95 aa).

In terms of processing, phosphorylated by PmrB.

The protein resides in the cytoplasm. Its function is as follows. Member of the two-component regulatory system PmrB/PmrA involved in regulation of virulence. Unphosphorylated PmrA represses extracellular enzyme genes. Phosphorylation of PmrA by PmrB relieves such repression, which leads to activation of extracellular enzyme genes. Phosphorylated PmrA seems to repress expression of the pmrCAB operon. The protein is Transcriptional regulatory protein PmrA (pmrA) of Pectobacterium parmentieri.